The sequence spans 409 residues: Lipoyl synthase, mitochondrial (409 aa).

A disordered region spans residues glutamine 21–leucine 41. The [4Fe-4S] cluster site is built by cysteine 125, cysteine 130, cysteine 136, cysteine 159, cysteine 163, cysteine 166, and serine 375. Residues glutamate 142 to leucine 364 enclose the Radical SAM core domain.

Belongs to the radical SAM superfamily. Lipoyl synthase family. Requires [4Fe-4S] cluster as cofactor.

It is found in the mitochondrion. It catalyses the reaction [[Fe-S] cluster scaffold protein carrying a second [4Fe-4S](2+) cluster] + N(6)-octanoyl-L-lysyl-[protein] + 2 oxidized [2Fe-2S]-[ferredoxin] + 2 S-adenosyl-L-methionine + 4 H(+) = [[Fe-S] cluster scaffold protein] + N(6)-[(R)-dihydrolipoyl]-L-lysyl-[protein] + 4 Fe(3+) + 2 hydrogen sulfide + 2 5'-deoxyadenosine + 2 L-methionine + 2 reduced [2Fe-2S]-[ferredoxin]. It participates in protein modification; protein lipoylation via endogenous pathway; protein N(6)-(lipoyl)lysine from octanoyl-[acyl-carrier-protein]: step 2/2. Its function is as follows. Catalyzes the radical-mediated insertion of two sulfur atoms into the C-6 and C-8 positions of the octanoyl moiety bound to the lipoyl domains of lipoate-dependent enzymes, thereby converting the octanoylated domains into lipoylated derivatives. The polypeptide is Lipoyl synthase, mitochondrial (Trypanosoma brucei gambiense (strain MHOM/CI/86/DAL972)).